The primary structure comprises 176 residues: Large ribosomal subunit protein uL6 (176 aa).

The span at 151–169 (RPPEPYKGRGIKYTDEHIQ) shows a compositional bias: basic and acidic residues. The tract at residues 151–176 (RPPEPYKGRGIKYTDEHIQRKAGKTK) is disordered.

This sequence belongs to the universal ribosomal protein uL6 family. In terms of assembly, part of the 50S ribosomal subunit.

This protein binds to the 23S rRNA, and is important in its secondary structure. It is located near the subunit interface in the base of the L7/L12 stalk, and near the tRNA binding site of the peptidyltransferase center. This is Large ribosomal subunit protein uL6 from Desulfosudis oleivorans (strain DSM 6200 / JCM 39069 / Hxd3) (Desulfococcus oleovorans).